The primary structure comprises 554 residues: Membrane protein insertase YidC (554 aa).

5 helical membrane-spanning segments follow: residues 7-24 (VLWV…DNWQ), 362-382 (VVGN…AVFF), 436-456 (LPVV…LASV), 475-495 (PFFI…SLNP), and 510-530 (PIAF…YYVV).

This sequence belongs to the OXA1/ALB3/YidC family. Type 1 subfamily. As to quaternary structure, interacts with the Sec translocase complex via SecD. Specifically interacts with transmembrane segments of nascent integral membrane proteins during membrane integration.

It localises to the cell inner membrane. Its function is as follows. Required for the insertion and/or proper folding and/or complex formation of integral membrane proteins into the membrane. Involved in integration of membrane proteins that insert both dependently and independently of the Sec translocase complex, as well as at least some lipoproteins. Aids folding of multispanning membrane proteins. In Burkholderia vietnamiensis (strain G4 / LMG 22486) (Burkholderia cepacia (strain R1808)), this protein is Membrane protein insertase YidC.